The chain runs to 511 residues: 2,3-bisphosphoglycerate-independent phosphoglycerate mutase (511 aa).

Asp-12 provides a ligand contact to Mn(2+). Position 36 is a phosphotyrosine (Tyr-36). Ser-62 is a Mn(2+) binding site. Ser-62 functions as the Phosphoserine intermediate in the catalytic mechanism. Residues His-123, 153 to 154 (RD), Arg-185, Arg-191, 261 to 264 (RPDR), and Lys-336 each bind substrate. Mn(2+) is bound by residues Asp-403, His-407, Asp-444, His-445, and His-462.

Belongs to the BPG-independent phosphoglycerate mutase family. Monomer. Mn(2+) serves as cofactor.

The catalysed reaction is (2R)-2-phosphoglycerate = (2R)-3-phosphoglycerate. It participates in carbohydrate degradation; glycolysis; pyruvate from D-glyceraldehyde 3-phosphate: step 3/5. In terms of biological role, essential for rapid growth and for sporulation. Catalyzes the interconversion of 2-phosphoglycerate and 3-phosphoglycerate. The sequence is that of 2,3-bisphosphoglycerate-independent phosphoglycerate mutase from Bacillus velezensis (strain DSM 23117 / BGSC 10A6 / LMG 26770 / FZB42) (Bacillus amyloliquefaciens subsp. plantarum).